We begin with the raw amino-acid sequence, 471 residues long: UDP-N-acetylmuramoylalanine--D-glutamate ligase (471 aa).

Position 123-129 (123-129 (GTNGKST)) interacts with ATP.

This sequence belongs to the MurCDEF family.

The protein localises to the cytoplasm. It carries out the reaction UDP-N-acetyl-alpha-D-muramoyl-L-alanine + D-glutamate + ATP = UDP-N-acetyl-alpha-D-muramoyl-L-alanyl-D-glutamate + ADP + phosphate + H(+). The protein operates within cell wall biogenesis; peptidoglycan biosynthesis. Functionally, cell wall formation. Catalyzes the addition of glutamate to the nucleotide precursor UDP-N-acetylmuramoyl-L-alanine (UMA). The chain is UDP-N-acetylmuramoylalanine--D-glutamate ligase from Caulobacter vibrioides (strain ATCC 19089 / CIP 103742 / CB 15) (Caulobacter crescentus).